The primary structure comprises 204 residues: Guanine-specific ADP-ribosyl transferase (204 aa).

The signal sequence occupies residues 1 to 42 (MITTSLRRRTAAAVLSLSAVLATTAATAPGAAPAPSAAPAKA). Cys46 and Cys76 are oxidised to a cystine. NADH contacts are provided by residues 81–85 (RSDSR) and Lys98. GDP-binding positions include 111–114 (VLVN), 132–134 (WYK), Trp159, and Gln162. The PN (phosphate-nicotinamide) loop signature appears at 132–136 (WYKSG). Residues Cys180 and Cys194 are joined by a disulfide bond.

Belongs to the pierisin ADP-ribosyltransferase family. In terms of assembly, monomer.

Its subcellular location is the secreted. The catalysed reaction is guanosine + NAD(+) = N(2)-(ADP-D-ribosyl)-guanosine + nicotinamide + H(+). The enzyme catalyses a 2'-deoxyguanosine in DNA + NAD(+) = an N(2)-(ADP-L-ribosyl)-2'-deoxyguanosine in DNA + nicotinamide + H(+). It catalyses the reaction 2'-deoxyguanosine + NAD(+) = N(2)-(ADP-D-ribosyl)-2'-deoxyguanosine + nicotinamide + H(+). It carries out the reaction GMP + NAD(+) = N(2)-(ADP-D-ribosyl)-GMP + nicotinamide + H(+). The catalysed reaction is GTP + NAD(+) = N(2)-(ADP-D-ribosyl)-GTP + nicotinamide + H(+). The enzyme catalyses dGMP + NAD(+) = N(2)-(ADP-D-ribosyl)-dGMP + nicotinamide + H(+). It catalyses the reaction dGTP + NAD(+) = N(2)-(ADP-D-ribosyl)-dGTP + nicotinamide + H(+). It carries out the reaction 3',5'-cyclic GMP + NAD(+) = N(2)-(ADP-D-ribosyl)-3',5'-cyclic GMP + nicotinamide + H(+). The catalysed reaction is guanine + NAD(+) = N(2)-(ADP-D-ribosyl)-guanine + nicotinamide + H(+). The enzyme catalyses GDP + NAD(+) = N(2)-(ADP-D-ribosyl)-GDP + nicotinamide + H(+). Its activity is regulated as follows. Inhibited by NADH. Functionally, ADP-ribosylates the N2 amino group of guanosine, deoxyguanosine, GMP, dGMP, cGMP, GTP and dGTP; oligo-guanosine, oligo-deoxyguanosine and tRNA are ADP-ribosylated less efficiently, while dsDNA is a very poor substrate. Also acts on GDP. The protein is Guanine-specific ADP-ribosyl transferase of Streptomyces coelicolor (strain ATCC BAA-471 / A3(2) / M145).